A 466-amino-acid polypeptide reads, in one-letter code: Cysteine--tRNA ligase (466 aa).

Cys-28 is a Zn(2+) binding site. A 'HIGH' region motif is present at residues 30 to 40; the sequence is PTVYNYIHIGN. Positions 208, 233, and 237 each coordinate Zn(2+). The short motif at 265 to 269 is the 'KMSKS' region element; sequence KMSKS. An ATP-binding site is contributed by Lys-268. Ser-269 carries the post-translational modification Phosphoserine.

This sequence belongs to the class-I aminoacyl-tRNA synthetase family. In terms of assembly, monomer. Zn(2+) serves as cofactor.

It is found in the cytoplasm. It catalyses the reaction tRNA(Cys) + L-cysteine + ATP = L-cysteinyl-tRNA(Cys) + AMP + diphosphate. The sequence is that of Cysteine--tRNA ligase from Shouchella clausii (strain KSM-K16) (Alkalihalobacillus clausii).